Here is an 81-residue protein sequence, read N- to C-terminus: Insulin-like growth factor 1 (81 aa).

A propeptide spanning residues 1-4 (FASA) is cleaved from the precursor. The tract at residues 5-33 (GPETLCGAELVDALQFVCGDRGFYFNKPT) is b. 3 disulfides stabilise this stretch: cysteine 10/cysteine 52, cysteine 22/cysteine 65, and cysteine 51/cysteine 56. Residues 34 to 45 (GYGSSSRRAPQT) are c. The segment at 46–66 (GIVDECCFRSCDLRRLEMYCA) is a. The d stretch occupies residues 67-74 (PLKPAKAA). Positions 75–81 (RSVRAQR) are cleaved as a propeptide — e peptide.

The protein belongs to the insulin family. As to quaternary structure, forms a ternary complex with IGFR1 and ITGAV:ITGB3. Forms a ternary complex with IGFR1 and ITGA6:ITGB4.

It localises to the secreted. The insulin-like growth factors, isolated from plasma, are structurally and functionally related to insulin but have a much higher growth-promoting activity. May be a physiological regulator of [1-14C]-2-deoxy-D-glucose (2DG) transport and glycogen synthesis in osteoblasts. Stimulates glucose transport in bone-derived osteoblastic (PyMS) cells and is effective at much lower concentrations than insulin, not only regarding glycogen and DNA synthesis but also with regard to enhancing glucose uptake. May play a role in synapse maturation. Ca(2+)-dependent exocytosis of IGF1 is required for sensory perception of smell in the olfactory bulb. Acts as a ligand for IGF1R. Binds to the alpha subunit of IGF1R, leading to the activation of the intrinsic tyrosine kinase activity which autophosphorylates tyrosine residues in the beta subunit thus initiating a cascade of down-stream signaling events leading to activation of the PI3K-AKT/PKB and the Ras-MAPK pathways. Binds to integrins ITGAV:ITGB3 and ITGA6:ITGB4. Its binding to integrins and subsequent ternary complex formation with integrins and IGFR1 are essential for IGF1 signaling. Induces the phosphorylation and activation of IGFR1, MAPK3/ERK1, MAPK1/ERK2 and AKT1. As part of the MAPK/ERK signaling pathway, acts as a negative regulator of apoptosis in cardiomyocytes via promotion of STUB1/CHIP-mediated ubiquitination and degradation of ICER-type isoforms of CREM. The chain is Insulin-like growth factor 1 from Suncus murinus (Asian house shrew).